Consider the following 137-residue polypeptide: Large ribosomal subunit protein eL28 (137 aa).

Position 2 is an N-acetylserine (serine 2). Glycyl lysine isopeptide (Lys-Gly) (interchain with G-Cter in SUMO2) cross-links involve residues lysine 58 and lysine 65. A Phosphoserine modification is found at serine 115.

Belongs to the eukaryotic ribosomal protein eL28 family. In terms of assembly, component of the large ribosomal subunit.

It localises to the cytoplasm. Functionally, component of the large ribosomal subunit. The ribosome is a large ribonucleoprotein complex responsible for the synthesis of proteins in the cell. This Mus musculus (Mouse) protein is Large ribosomal subunit protein eL28 (Rpl28).